The chain runs to 308 residues: uncharacterized protein (308 aa).

The signal sequence occupies residues 1-17 (MKSLALLLSLLINFSIG). 4 N-linked (GlcNAc...) asparagine glycosylation sites follow: Asn13, Asn91, Asn159, and Asn210. Positions 213–308 (DEISGGTGAG…HDNYISSFCT (96 aa)) are disordered. 2 stretches are compositionally biased toward gly residues: residues 217 to 231 (GGTG…GSGS) and 239 to 252 (SDGG…GSGS). Low complexity predominate over residues 267–284 (NKNNNKNKNNNNNNNNYN).

It localises to the secreted. This is an uncharacterized protein from Dictyostelium discoideum (Social amoeba).